The primary structure comprises 862 residues: Leucine--tRNA ligase (862 aa).

Residues 44–54 (PYPSGRIHMGH) carry the 'HIGH' region motif. Residues 622-626 (KMSKS) carry the 'KMSKS' region motif. Lysine 625 is a binding site for ATP.

This sequence belongs to the class-I aminoacyl-tRNA synthetase family.

The protein localises to the cytoplasm. The enzyme catalyses tRNA(Leu) + L-leucine + ATP = L-leucyl-tRNA(Leu) + AMP + diphosphate. The protein is Leucine--tRNA ligase of Rhodospirillum rubrum (strain ATCC 11170 / ATH 1.1.1 / DSM 467 / LMG 4362 / NCIMB 8255 / S1).